The following is a 373-amino-acid chain: MFTRADLEAREAALLPPFARRSSEARRAVPEAPSETRTAYQKDRDRVLHTKAFRRLEAKTQVFLNAPALGDHYRTRLTHTLEVQQVARTAALSLGLNETLAETVALAHDLGHPPFGHAGERLLDSLMRGHGETFDHNSQARRIVTLLEERSGEQPGLNLTLDTLDGLNKHGRAALPPTQRQPSLEAQVVDAADALAYTAHDLDDGLRSGLLHPEDLLELPLWRELQERSGVTSQRPSSADLRTLQRELLGWLIGDLTRSSDAAIAASGVASPDAVQAHAHRLVTYSPALRGHLRGAGDFLRERLYRHWQVEREVYQAEQVLTELFGAFLTRPALLPPRPRSRVGRDGLPRAICDHLAGMTDRYALETHAALRG.

The tract at residues 21–43 is disordered; sequence RSSEARRAVPEAPSETRTAYQKD. One can recognise an HD domain in the interval 76–198; it reads RLTHTLEVQQ…VDAADALAYT (123 aa).

Belongs to the dGTPase family. Type 2 subfamily.

This Deinococcus radiodurans (strain ATCC 13939 / DSM 20539 / JCM 16871 / CCUG 27074 / LMG 4051 / NBRC 15346 / NCIMB 9279 / VKM B-1422 / R1) protein is Deoxyguanosinetriphosphate triphosphohydrolase-like protein 1.